The chain runs to 1207 residues: DNA-directed RNA polymerase subunit beta' (1207 aa).

Zn(2+) contacts are provided by Cys60, Cys62, Cys75, and Cys78. Residues Asp450, Asp452, and Asp454 each coordinate Mg(2+). Cys818, Cys892, Cys899, and Cys902 together coordinate Zn(2+).

This sequence belongs to the RNA polymerase beta' chain family. The RNAP catalytic core consists of 2 alpha, 1 beta, 1 beta' and 1 omega subunit. When a sigma factor is associated with the core the holoenzyme is formed, which can initiate transcription. Mg(2+) is required as a cofactor. Zn(2+) serves as cofactor.

The enzyme catalyses RNA(n) + a ribonucleoside 5'-triphosphate = RNA(n+1) + diphosphate. Functionally, DNA-dependent RNA polymerase catalyzes the transcription of DNA into RNA using the four ribonucleoside triphosphates as substrates. In Lactococcus lactis subsp. cremoris (strain SK11), this protein is DNA-directed RNA polymerase subunit beta'.